Reading from the N-terminus, the 304-residue chain is UDP-N-acetylenolpyruvoylglucosamine reductase (304 aa).

The FAD-binding PCMH-type domain occupies Lys31–Gly196. The active site involves Arg175. Ser225 acts as the Proton donor in catalysis. Glu295 is an active-site residue.

It belongs to the MurB family. FAD is required as a cofactor.

The protein localises to the cytoplasm. It carries out the reaction UDP-N-acetyl-alpha-D-muramate + NADP(+) = UDP-N-acetyl-3-O-(1-carboxyvinyl)-alpha-D-glucosamine + NADPH + H(+). It functions in the pathway cell wall biogenesis; peptidoglycan biosynthesis. Functionally, cell wall formation. The polypeptide is UDP-N-acetylenolpyruvoylglucosamine reductase (Streptococcus thermophilus (strain CNRZ 1066)).